The sequence spans 311 residues: Ribonuclease HIII (311 aa).

Residues L93–H310 enclose the RNase H type-2 domain. 3 residues coordinate a divalent metal cation: D99, E100, and D204.

This sequence belongs to the RNase HII family. RnhC subfamily. It depends on Mn(2+) as a cofactor. Mg(2+) serves as cofactor.

The protein resides in the cytoplasm. The catalysed reaction is Endonucleolytic cleavage to 5'-phosphomonoester.. Functionally, endonuclease that specifically degrades the RNA of RNA-DNA hybrids. The chain is Ribonuclease HIII from Geobacillus kaustophilus (strain HTA426).